A 286-amino-acid chain; its full sequence is Probable aquaporin-3 (286 aa).

Positions 1-34 (MADTYGMNGHNGHVKDRRSSSMNGRNRLYAQQEP) are disordered. Residues 1 to 52 (MADTYGMNGHNGHVKDRRSSSMNGRNRLYAQQEPQRTTHLSEFGKHMVAASG) lie on the Cytoplasmic side of the membrane. A helical transmembrane segment spans residues 53–73 (EFVGTFLFLYFGYAGNIVAVL). Over 74-87 (QEPISGPNGTLANN) the chain is Extracellular. 2 N-linked (GlcNAc...) asparagine glycosylation sites follow: asparagine 81 and asparagine 86. Residues 88-108 (TVMYIAMAYGFSLLVNVWTFY) form a helical membrane-spanning segment. Over 109–135 (RISGGLFNPAVTFGLCLSGQLPWIRAL) the chain is Cytoplasmic. Residues 116–118 (NPA) carry the NPA 1 motif. A helical transmembrane segment spans residues 136–156 (FLFPSQIIAAMCAGGLVNAMF). Residues 157-175 (PGSASIANTTLGPNTSIAQ) are Extracellular-facing. 2 N-linked (GlcNAc...) asparagine glycosylation sites follow: asparagine 164 and asparagine 170. Residues 176–196 (GVFLEMFFTAQLVFVVLMLAA) form a helical membrane-spanning segment. Residues 197–202 (EKSRDT) lie on the Cytoplasmic side of the membrane. The helical transmembrane segment at 203–223 (FLAPVGIGLALFVALIPGVFV) threads the bilayer. The Extracellular segment spans residues 224-244 (TGGSANPVRSFGCAVGSRDFP). The short motif at 229–231 (NPV) is the NPA 2 element. The chain crosses the membrane as a helical span at residues 245 to 265 (GYHWIYWVGPLLGAALAAGYF). Residues 266–286 (RLVKMMHYEEANPGQDSPVDV) are Cytoplasmic-facing.

It belongs to the MIP/aquaporin (TC 1.A.8) family.

The protein resides in the membrane. It carries out the reaction H2O(in) = H2O(out). Functionally, probable water channel that may have redundant functions with FgAQP5. The polypeptide is Probable aquaporin-3 (Gibberella zeae (strain ATCC MYA-4620 / CBS 123657 / FGSC 9075 / NRRL 31084 / PH-1) (Wheat head blight fungus)).